Consider the following 201-residue polypeptide: 3-isopropylmalate dehydratase small subunit (201 aa).

It belongs to the LeuD family. LeuD type 1 subfamily. In terms of assembly, heterodimer of LeuC and LeuD.

The catalysed reaction is (2R,3S)-3-isopropylmalate = (2S)-2-isopropylmalate. It participates in amino-acid biosynthesis; L-leucine biosynthesis; L-leucine from 3-methyl-2-oxobutanoate: step 2/4. In terms of biological role, catalyzes the isomerization between 2-isopropylmalate and 3-isopropylmalate, via the formation of 2-isopropylmaleate. The protein is 3-isopropylmalate dehydratase small subunit of Cereibacter sphaeroides (strain KD131 / KCTC 12085) (Rhodobacter sphaeroides).